The chain runs to 543 residues: Malate synthase (543 aa).

Belongs to the malate synthase family. As to quaternary structure, homodimer.

It localises to the cytoplasm. It catalyses the reaction glyoxylate + acetyl-CoA + H2O = (S)-malate + CoA + H(+). It participates in carbohydrate metabolism; glyoxylate cycle; (S)-malate from isocitrate: step 2/2. The chain is Malate synthase (aceB) from Streptomyces arenae.